The sequence spans 200 residues: MQQQTGGRRRQIRRVVVATSNAGKVRELQGALAPLGWQCEGLGAVTLPEETGSTYEENAALKACAAAMATGLPALADDSGIEVLALGGQPGVYSARFGNVNSDVERNVLLLEKMRRHTDRRAKFVSVLVLAYPDGKLEEYRGEVTGQLLEGPRGESGFGYDPLFLPDGSELSMGEMTLEQKQAISHRGQALAALLAAHGA.

19–24 (TSNAGK) is a substrate binding site. Mg(2+) contacts are provided by Glu-49 and Asp-78. Asp-78 (proton acceptor) is an active-site residue. Residues Ser-79, 158–161 (FGYD), Lys-181, and 186–187 (HR) contribute to the substrate site.

The protein belongs to the HAM1 NTPase family. Homodimer. The cofactor is Mg(2+).

It catalyses the reaction XTP + H2O = XMP + diphosphate + H(+). The enzyme catalyses dITP + H2O = dIMP + diphosphate + H(+). The catalysed reaction is ITP + H2O = IMP + diphosphate + H(+). In terms of biological role, pyrophosphatase that catalyzes the hydrolysis of nucleoside triphosphates to their monophosphate derivatives, with a high preference for the non-canonical purine nucleotides XTP (xanthosine triphosphate), dITP (deoxyinosine triphosphate) and ITP. Seems to function as a house-cleaning enzyme that removes non-canonical purine nucleotides from the nucleotide pool, thus preventing their incorporation into DNA/RNA and avoiding chromosomal lesions. The polypeptide is dITP/XTP pyrophosphatase (Deinococcus radiodurans (strain ATCC 13939 / DSM 20539 / JCM 16871 / CCUG 27074 / LMG 4051 / NBRC 15346 / NCIMB 9279 / VKM B-1422 / R1)).